The sequence spans 483 residues: Protein nucleotidyltransferase YdiU (483 aa).

8 residues coordinate ATP: glycine 87, glycine 89, arginine 90, lysine 110, aspartate 122, glycine 123, arginine 173, and arginine 180. Aspartate 249 serves as the catalytic Proton acceptor. Residues asparagine 250 and aspartate 259 each contribute to the Mg(2+) site. ATP is bound at residue aspartate 259.

This sequence belongs to the SELO family. It depends on Mg(2+) as a cofactor. The cofactor is Mn(2+).

The catalysed reaction is L-seryl-[protein] + ATP = 3-O-(5'-adenylyl)-L-seryl-[protein] + diphosphate. It catalyses the reaction L-threonyl-[protein] + ATP = 3-O-(5'-adenylyl)-L-threonyl-[protein] + diphosphate. It carries out the reaction L-tyrosyl-[protein] + ATP = O-(5'-adenylyl)-L-tyrosyl-[protein] + diphosphate. The enzyme catalyses L-histidyl-[protein] + UTP = N(tele)-(5'-uridylyl)-L-histidyl-[protein] + diphosphate. The catalysed reaction is L-seryl-[protein] + UTP = O-(5'-uridylyl)-L-seryl-[protein] + diphosphate. It catalyses the reaction L-tyrosyl-[protein] + UTP = O-(5'-uridylyl)-L-tyrosyl-[protein] + diphosphate. Functionally, nucleotidyltransferase involved in the post-translational modification of proteins. It can catalyze the addition of adenosine monophosphate (AMP) or uridine monophosphate (UMP) to a protein, resulting in modifications known as AMPylation and UMPylation. The sequence is that of Protein nucleotidyltransferase YdiU from Pectobacterium atrosepticum (strain SCRI 1043 / ATCC BAA-672) (Erwinia carotovora subsp. atroseptica).